The primary structure comprises 872 residues: F-box protein pof6 (872 aa).

One can recognise an F-box domain in the interval 30-75 (FGCLTINIYLKIFTLISTPDLCNCRLVCRKFQQLCDYNSIYVKKLL). The interval 101 to 122 (MSSNTSKGFHLQSSDKKYADSD) is disordered. A compositionally biased stretch (basic and acidic residues) spans 113 to 122 (SSDKKYADSD).

Interacts with skp1. Forms a complex with pof6 and skp1.

The protein localises to the cytoplasm. It localises to the nucleus. Functionally, together with skp1, essential for septum processing and cell separation. In Schizosaccharomyces pombe (strain 972 / ATCC 24843) (Fission yeast), this protein is F-box protein pof6 (pof6).